The primary structure comprises 512 residues: MGIQAAEISAILKDQIKNFGQEAEVAEIGRVLSVGDGIARVYGLDNVQAGEMVEFPGGIMGMALNLENDNVGVVIFGSDRDIKEGDTVKRTNSIVDVPQGDELLGRVVDGLGNPIDGKGPINAKLRGVADVKAPGIIPRKSVHEPMATGLKAVDSMIPIGRGQRELIIGDRQTGKTAIALDTILNQKSYNDAAGDDESKKLYCVYVAIGQKRSTVAQLVKKLEENGAMEYSIVVAATASDPAPMQFLAPYAATAMAEYFRDNGRHALIIYDDLSKQAVAYRQMSLLLRRPPGREAYPGDVFYLHSRLLERSAKLNEDFGAGSLTALPVIETQGGDVSAFIPTNVISITDGQIFLETELFYQGIRPAVNTGLSVSRVGSSAQTKAMSSVAGPVKLSLAQYREMAAFAQFGSDLDAATQQLLNRGARLTELMKQPQYSPLTNAEIVCVIFAGTNGYLDKVALADVGRWEAGLLQHLRGKHAELLAWITNEDPKIKDDAAGRVKAALDEYAATFA.

169-176 (GDRQTGKT) contributes to the ATP binding site.

Belongs to the ATPase alpha/beta chains family. F-type ATPases have 2 components, CF(1) - the catalytic core - and CF(0) - the membrane proton channel. CF(1) has five subunits: alpha(3), beta(3), gamma(1), delta(1), epsilon(1). CF(0) has three main subunits: a(1), b(2) and c(9-12). The alpha and beta chains form an alternating ring which encloses part of the gamma chain. CF(1) is attached to CF(0) by a central stalk formed by the gamma and epsilon chains, while a peripheral stalk is formed by the delta and b chains.

The protein localises to the cell inner membrane. It catalyses the reaction ATP + H2O + 4 H(+)(in) = ADP + phosphate + 5 H(+)(out). Functionally, produces ATP from ADP in the presence of a proton gradient across the membrane. The alpha chain is a regulatory subunit. The chain is ATP synthase subunit alpha from Ruegeria pomeroyi (strain ATCC 700808 / DSM 15171 / DSS-3) (Silicibacter pomeroyi).